The sequence spans 218 residues: GTP cyclohydrolase 1 (218 aa).

Positions 109, 112, and 180 each coordinate Zn(2+).

The protein belongs to the GTP cyclohydrolase I family. As to quaternary structure, toroid-shaped homodecamer, composed of two pentamers of five dimers.

The enzyme catalyses GTP + H2O = 7,8-dihydroneopterin 3'-triphosphate + formate + H(+). It participates in cofactor biosynthesis; 7,8-dihydroneopterin triphosphate biosynthesis; 7,8-dihydroneopterin triphosphate from GTP: step 1/1. In Mannheimia succiniciproducens (strain KCTC 0769BP / MBEL55E), this protein is GTP cyclohydrolase 1.